The primary structure comprises 415 residues: Leucine-rich repeat-containing protein 34 (415 aa).

2 LRR repeats span residues 246–272 and 274–296; these read TLRY…LKSN and TLEV…LSET.

In terms of assembly, interacts with NPM1 and NCL.

It localises to the nucleus. It is found in the nucleolus. The protein localises to the cytoplasm. In terms of biological role, highly expressed in stem cells where it may be involved in regulation of pluripotency. In embryonic stem cells (ESCs), important for normal expression of the pluripotency regulators POU5F1/OCT4 and KLF4. Also important for expression of the ectodermal marker gene NES and the endodermal marker gene GATA4. Promotes stem cell proliferation in vitro. This is Leucine-rich repeat-containing protein 34 (Lrrc34) from Rattus norvegicus (Rat).